Consider the following 358-residue polypeptide: Alanine racemase (358 aa).

The active-site Proton acceptor; specific for D-alanine is the lysine 35. Lysine 35 carries the post-translational modification N6-(pyridoxal phosphate)lysine. Residue arginine 130 participates in substrate binding. Tyrosine 255 (proton acceptor; specific for L-alanine) is an active-site residue. Substrate is bound at residue methionine 303.

The protein belongs to the alanine racemase family. The cofactor is pyridoxal 5'-phosphate.

The enzyme catalyses L-alanine = D-alanine. It functions in the pathway amino-acid biosynthesis; D-alanine biosynthesis; D-alanine from L-alanine: step 1/1. Its function is as follows. Catalyzes the interconversion of L-alanine and D-alanine. May also act on other amino acids. This Shewanella sp. (strain W3-18-1) protein is Alanine racemase (alr).